A 226-amino-acid polypeptide reads, in one-letter code: ATP-dependent dethiobiotin synthetase BioD (226 aa).

An ATP-binding site is contributed by 12 to 17 (GIGKTV). Mg(2+) is bound at residue Thr-16. Lys-37 is an active-site residue. Thr-41 provides a ligand contact to substrate. ATP contacts are provided by residues Asp-49, 108 to 111 (EGAG), 169 to 170 (GS), and 197 to 199 (PAG). Residues Asp-49 and Glu-108 each contribute to the Mg(2+) site.

Belongs to the dethiobiotin synthetase family. As to quaternary structure, homodimer. It depends on Mg(2+) as a cofactor.

The protein localises to the cytoplasm. The enzyme catalyses (7R,8S)-7,8-diammoniononanoate + CO2 + ATP = (4R,5S)-dethiobiotin + ADP + phosphate + 3 H(+). It functions in the pathway cofactor biosynthesis; biotin biosynthesis; biotin from 7,8-diaminononanoate: step 1/2. Catalyzes a mechanistically unusual reaction, the ATP-dependent insertion of CO2 between the N7 and N8 nitrogen atoms of 7,8-diaminopelargonic acid (DAPA, also called 7,8-diammoniononanoate) to form a ureido ring. This is ATP-dependent dethiobiotin synthetase BioD from Mycolicibacterium gilvum (strain PYR-GCK) (Mycobacterium gilvum (strain PYR-GCK)).